Here is a 305-residue protein sequence, read N- to C-terminus: Heme A synthase (305 aa).

The Cytoplasmic portion of the chain corresponds to 1–6 (MKKFLK). Residues 7–27 (VWSVLTIICMTVVVFGGALVT) traverse the membrane as a helical segment. The Extracellular portion of the chain corresponds to 28 to 63 (KTGSADGCGNSWPLCNGQLVRLTDVTPEKLIEFMHR). A disulfide bridge connects residues Cys35 and Cys42. Glu59 is an active-site residue. His62 contacts heme o. Residues 64–84 (MTTGISSIFVIVLAICAWIYM) traverse the membrane as a helical segment. The Cytoplasmic segment spans residues 85-92 (KNRRETKP). Residues 93–113 (LAIIAVLFLIIQALMGMAAVV) traverse the membrane as a helical segment. Over 114-122 (WGQNPYIMA) the chain is Extracellular. Residues 123–143 (LHFGISIICYASIVLLALMIF) traverse the membrane as a helical segment. Residue His124 coordinates heme o. Topologically, residues 144–160 (EVDRKFDARNLVMGTKL) are cytoplasmic. The helical transmembrane segment at 161-181 (RVNIYALTIYTYLAVYTGALV) threads the bilayer. Topologically, residues 182 to 212 (RHEKASMAVPVWPFENGHFIMPTSVQDYVQY) are extracellular. The chain crosses the membrane as a helical span at residues 213–233 (FHRLAAFILIVWLLYVTWLVF). Residue His214 participates in heme b binding. Topologically, residues 234-240 (RDYRRYR) are cytoplasmic. Residues 241 to 261 (VLTFSMVLSLVFIALQAVTGA) form a helical membrane-spanning segment. Over 262-271 (LSVYTGVNLY) the chain is Extracellular. Residues 272-292 (IALAHSLIITMLFALLCYLCL) form a helical membrane-spanning segment. His276 is a heme b binding site. Over 293 to 305 (LASRSKSNRLRIK) the chain is Cytoplasmic.

Belongs to the COX15/CtaA family. Type 1 subfamily. As to quaternary structure, interacts with CtaB. It depends on heme b as a cofactor.

Its subcellular location is the cell membrane. The catalysed reaction is Fe(II)-heme o + 2 A + H2O = Fe(II)-heme a + 2 AH2. Its pathway is porphyrin-containing compound metabolism; heme A biosynthesis; heme A from heme O: step 1/1. In terms of biological role, catalyzes the conversion of heme O to heme A by two successive hydroxylations of the methyl group at C8. The first hydroxylation forms heme I, the second hydroxylation results in an unstable dihydroxymethyl group, which spontaneously dehydrates, resulting in the formyl group of heme A. This Listeria monocytogenes serovar 1/2a (strain ATCC BAA-679 / EGD-e) protein is Heme A synthase.